Here is a 114-residue protein sequence, read N- to C-terminus: Protein D2 (114 aa).

It belongs to the phosphatidylethanolamine-binding protein family.

This is Protein D2 (D2) from Onchocerca volvulus.